A 384-amino-acid polypeptide reads, in one-letter code: Deoxyguanosinetriphosphate triphosphohydrolase-like protein (384 aa).

Positions 62 to 198 (RLTHSLEVST…AALADDISYI (137 aa)) constitute an HD domain.

Belongs to the dGTPase family. Type 2 subfamily.

In Rickettsia conorii (strain ATCC VR-613 / Malish 7), this protein is Deoxyguanosinetriphosphate triphosphohydrolase-like protein.